The following is a 325-amino-acid chain: Diacylglycerol acyltransferase/mycolyltransferase Ag85B (325 aa).

An N-terminal signal peptide occupies residues 1 to 38; that stretch reads MTFIDKIRGHWARRMTVAAVAALLLPGLVGVVGGSATA. Position 82–83 (82–83) interacts with substrate; the sequence is LR. The fibronectin-binding stretch occupies residues 98 to 108; that stretch reads FEMFLDSGLSV. Residues Cys-127 and Cys-132 are joined by a disulfide bond. Ser-166 serves as a coordination point for substrate. Ser-166 acts as the Nucleophile in catalysis. Residue Glu-272 is part of the active site. Residues 274–277 and 304–306 each bind substrate; these read LTIR and HNW. The active site involves His-304.

The protein belongs to the mycobacterial A85 antigen family.

Its subcellular location is the secreted. It catalyses the reaction 2 alpha,alpha'-trehalose 6-mycolate = alpha,alpha'-trehalose 6,6'-bismycolate + alpha,alpha-trehalose. The enzyme catalyses an acyl-CoA + a 1,2-diacyl-sn-glycerol = a triacyl-sn-glycerol + CoA. In terms of biological role, the antigen 85 proteins (FbpA, FbpB, FbpC) are responsible for the high affinity of mycobacteria for fibronectin, a large adhesive glycoprotein. They also help to maintain the integrity of the cell wall by catalyzing the transfer of mycolic acids to cell wall arabinogalactan and through the synthesis of alpha,alpha-trehalose dimycolate (TDM, cord factor). They catalyze the transfer of a mycoloyl residue from one molecule of alpha,alpha-trehalose monomycolate (TMM) to another TMM, leading to the formation of TDM. In Mycolicibacterium smegmatis (strain ATCC 700084 / mc(2)155) (Mycobacterium smegmatis), this protein is Diacylglycerol acyltransferase/mycolyltransferase Ag85B (fbpB).